A 382-amino-acid polypeptide reads, in one-letter code: D-alanine--D-alanine ligase (382 aa).

One can recognise an ATP-grasp domain in the interval 139–348 (KRLMRDAGLP…PPALMDALIA (210 aa)). 168–223 (EALESRTLFVKPANMGSSVGVSRVADAGQFDQALAHAFAYDEKILIERAVPRAREI) serves as a coordination point for ATP. Positions 300, 315, and 317 each coordinate Mg(2+).

This sequence belongs to the D-alanine--D-alanine ligase family. It depends on Mg(2+) as a cofactor. Requires Mn(2+) as cofactor.

Its subcellular location is the cytoplasm. The enzyme catalyses 2 D-alanine + ATP = D-alanyl-D-alanine + ADP + phosphate + H(+). Its pathway is cell wall biogenesis; peptidoglycan biosynthesis. Cell wall formation. This Methylobacterium sp. (strain 4-46) protein is D-alanine--D-alanine ligase.